Consider the following 205-residue polypeptide: Methylthioribulose-1-phosphate dehydratase (205 aa).

Zn(2+)-binding residues include His-96 and His-98.

Belongs to the aldolase class II family. MtnB subfamily. It depends on Zn(2+) as a cofactor.

It catalyses the reaction 5-(methylsulfanyl)-D-ribulose 1-phosphate = 5-methylsulfanyl-2,3-dioxopentyl phosphate + H2O. The protein operates within amino-acid biosynthesis; L-methionine biosynthesis via salvage pathway; L-methionine from S-methyl-5-thio-alpha-D-ribose 1-phosphate: step 2/6. Its function is as follows. Catalyzes the dehydration of methylthioribulose-1-phosphate (MTRu-1-P) into 2,3-diketo-5-methylthiopentyl-1-phosphate (DK-MTP-1-P). This chain is Methylthioribulose-1-phosphate dehydratase, found in Exiguobacterium sp. (strain ATCC BAA-1283 / AT1b).